The chain runs to 343 residues: Ribosomal RNA small subunit methyltransferase C (343 aa).

Belongs to the methyltransferase superfamily. RsmC family. As to quaternary structure, monomer.

The protein localises to the cytoplasm. The enzyme catalyses guanosine(1207) in 16S rRNA + S-adenosyl-L-methionine = N(2)-methylguanosine(1207) in 16S rRNA + S-adenosyl-L-homocysteine + H(+). In terms of biological role, specifically methylates the guanine in position 1207 of 16S rRNA in the 30S particle. The polypeptide is Ribosomal RNA small subunit methyltransferase C (Escherichia fergusonii (strain ATCC 35469 / DSM 13698 / CCUG 18766 / IAM 14443 / JCM 21226 / LMG 7866 / NBRC 102419 / NCTC 12128 / CDC 0568-73)).